Consider the following 405-residue polypeptide: Formate-dependent phosphoribosylglycinamide formyltransferase (405 aa).

Residues 27-28 (EL) and Glu-87 each bind N(1)-(5-phospho-beta-D-ribosyl)glycinamide. Residues Arg-120, Lys-162, 167-172 (SSGKGQ), 202-205 (EGFI), and Glu-210 each bind ATP. Positions 125–320 (RLAAETLGLP…EFELHARALL (196 aa)) constitute an ATP-grasp domain. Residues Glu-279 and Glu-291 each coordinate Mg(2+). N(1)-(5-phospho-beta-D-ribosyl)glycinamide contacts are provided by residues Asp-298, Lys-367, and 374–375 (RR).

This sequence belongs to the PurK/PurT family. In terms of assembly, homodimer.

It catalyses the reaction N(1)-(5-phospho-beta-D-ribosyl)glycinamide + formate + ATP = N(2)-formyl-N(1)-(5-phospho-beta-D-ribosyl)glycinamide + ADP + phosphate + H(+). Its pathway is purine metabolism; IMP biosynthesis via de novo pathway; N(2)-formyl-N(1)-(5-phospho-D-ribosyl)glycinamide from N(1)-(5-phospho-D-ribosyl)glycinamide (formate route): step 1/1. Functionally, involved in the de novo purine biosynthesis. Catalyzes the transfer of formate to 5-phospho-ribosyl-glycinamide (GAR), producing 5-phospho-ribosyl-N-formylglycinamide (FGAR). Formate is provided by PurU via hydrolysis of 10-formyl-tetrahydrofolate. The sequence is that of Formate-dependent phosphoribosylglycinamide formyltransferase from Bordetella avium (strain 197N).